Consider the following 735-residue polypeptide: Transcription factor RFX4 (735 aa).

Residues 27 to 59 (NKRYSSHTSLGNVSNDENEEKENNRASKPHSTP) form a disordered region. The span at 32 to 41 (SHTSLGNVSN) shows a compositional bias: polar residues. Residues 44–126 (NEEKENNRAS…RRLGTRGQSK (83 aa)) mediate DNA binding. Positions 61–136 (TLQWLEENYE…YHYYGIAVKE (76 aa)) form a DNA-binding region, RFX-type winged-helix. Residues 315–487 (RFSQILRRQT…NELMRAMKGE (173 aa)) are necessary for dimerization. Residues 501–538 (EATPPTPSPGPSFSPAKSATSVEVPPPSSPVSNPSPEY) are disordered.

It belongs to the RFX family. In terms of assembly, homodimer. Heterodimer with RFX2 and RFX3. Binds DNA. Interacts with GPS2. In terms of tissue distribution, isoform 1: Brain-specific. Isoform 2: Testis-specific. Isoform 1: Highly expressed in the suprachiasmatic nucleus, the central pacemaker site of the circadian clock (at protein level).

The protein resides in the nucleus. Transcription factor that plays a role in early brain development. May activate transcription by interacting directly with the X-box. May activate transcription from CX3CL1 promoter through the X-box during brain development. May be required for neural tube ciliogenesis during embryogenesis. In Mus musculus (Mouse), this protein is Transcription factor RFX4 (Rfx4).